Consider the following 160-residue polypeptide: Phosphopantetheine adenylyltransferase (160 aa).

S9 is a binding site for substrate. ATP is bound by residues 9–10 (SF) and H17. Substrate is bound by residues K41, L73, and K87. Residues 88–90 (GLR), E98, and 123–129 (YGYLSSS) each bind ATP.

It belongs to the bacterial CoaD family. In terms of assembly, homohexamer. It depends on Mg(2+) as a cofactor.

It localises to the cytoplasm. It carries out the reaction (R)-4'-phosphopantetheine + ATP + H(+) = 3'-dephospho-CoA + diphosphate. Its pathway is cofactor biosynthesis; coenzyme A biosynthesis; CoA from (R)-pantothenate: step 4/5. In terms of biological role, reversibly transfers an adenylyl group from ATP to 4'-phosphopantetheine, yielding dephospho-CoA (dPCoA) and pyrophosphate. The polypeptide is Phosphopantetheine adenylyltransferase (Caldanaerobacter subterraneus subsp. tengcongensis (strain DSM 15242 / JCM 11007 / NBRC 100824 / MB4) (Thermoanaerobacter tengcongensis)).